The primary structure comprises 518 residues: Chromosomal replication initiator protein DnaA (518 aa).

The segment at 1–76 is domain I, interacts with DnaA modulators; that stretch reads METDGGDFPS…RALSEAYGSP (76 aa). The interval 76-176 is domain II; that stretch reads PIRLAVTVDP…RRPTTRIENS (101 aa). The tract at residues 91 to 174 is disordered; it reads LTPERTGEHS…QPRRPTTRIE (84 aa). Residues 124-135 show a composition bias toward basic and acidic residues; that stretch reads DGLHLDERRSGS. Positions 136-147 are enriched in acidic residues; the sequence is LEEDSPLDDSDP. Positions 177-393 are domain III, AAA+ region; it reads RLNPKYIFET…GALIRVTAFA (217 aa). The ATP site is built by Gly-221, Gly-223, Lys-224, and Thr-225. The interval 394-518 is domain IV, binds dsDNA; it reads SLNRQPVDMQ…TNRIKKQSGA (125 aa).

The protein belongs to the DnaA family. Oligomerizes as a right-handed, spiral filament on DNA at oriC.

It localises to the cytoplasm. Plays an essential role in the initiation and regulation of chromosomal replication. ATP-DnaA binds to the origin of replication (oriC) to initiate formation of the DNA replication initiation complex once per cell cycle. Binds the DnaA box (a 9 base pair repeat at the origin) and separates the double-stranded (ds)DNA. Forms a right-handed helical filament on oriC DNA; dsDNA binds to the exterior of the filament while single-stranded (ss)DNA is stabiized in the filament's interior. The ATP-DnaA-oriC complex binds and stabilizes one strand of the AT-rich DNA unwinding element (DUE), permitting loading of DNA polymerase. After initiation quickly degrades to an ADP-DnaA complex that is not apt for DNA replication. Binds acidic phospholipids. The protein is Chromosomal replication initiator protein DnaA of Kineococcus radiotolerans (strain ATCC BAA-149 / DSM 14245 / SRS30216).